The primary structure comprises 252 residues: 5'-nucleotidase SurE (252 aa).

Residues Asp8, Asp9, Ser39, and Asn91 each contribute to the a divalent metal cation site.

The protein belongs to the SurE nucleotidase family. It depends on a divalent metal cation as a cofactor.

The protein localises to the cytoplasm. It carries out the reaction a ribonucleoside 5'-phosphate + H2O = a ribonucleoside + phosphate. Its function is as follows. Nucleotidase that shows phosphatase activity on nucleoside 5'-monophosphates. The chain is 5'-nucleotidase SurE from Bordetella pertussis (strain Tohama I / ATCC BAA-589 / NCTC 13251).